A 274-amino-acid chain; its full sequence is Glutamate racemase (274 aa).

Substrate is bound by residues 9-10 (DS) and 41-42 (YG). Catalysis depends on Cys-73, which acts as the Proton donor/acceptor. A substrate-binding site is contributed by 74–75 (NT). Catalysis depends on Cys-183, which acts as the Proton donor/acceptor. 184–185 (TH) serves as a coordination point for substrate.

Belongs to the aspartate/glutamate racemases family.

It carries out the reaction L-glutamate = D-glutamate. Its pathway is cell wall biogenesis; peptidoglycan biosynthesis. In terms of biological role, provides the (R)-glutamate required for cell wall biosynthesis. The chain is Glutamate racemase from Shewanella baltica (strain OS155 / ATCC BAA-1091).